The following is a 456-amino-acid chain: MRSDWIAPRRGQANVTQMHYARQGVITEEMDFVARRENLPADLIRDEVARGRMVIPANINHTNLEPMAIGIASKCKVNANIGASPNASNIDEEVEKLKLAVKYGADTVMDLSTGGGNLDEIRTAIINASPVPIGTVPVYQALESVHGRIEKHSADDFLHVIEKHCEQGVDYQTIHAGLLIEHLPKVKSRITGIVSRGGGIIAQWVLYHHKQNPLYTHFRDIIEIFKRYDCSFGLGDSLRPGCLHDASDDAQLSELKTLGQLTRVAWEHDVQVMVEGPGHVPMDQIEFNVRKQMEECSEAPFYVLGPLVTDIAPGYDHITSAIGAAMAGWYGTAMLCYVTPKEHLGLPNAEDVRNGLIAYKIAAHAADIARHRPGARDRDDELSRARYAFDWNKQFDLSLDPERAREYHDETLPADIYKTAEFCSMCGPKHCPMQTKITEEDLTELEKFLEKDSALA.

Residues Asn80, Met109, Tyr139, His175, Ser195–Gly197, Asp236–Arg239, and Glu275 contribute to the substrate site. Zn(2+) is bound at residue His279. Residue Tyr302 coordinates substrate. A Zn(2+)-binding site is contributed by His343. The [4Fe-4S] cluster site is built by Cys423, Cys426, and Cys431.

It belongs to the ThiC family. It depends on [4Fe-4S] cluster as a cofactor.

It catalyses the reaction 5-amino-1-(5-phospho-beta-D-ribosyl)imidazole + S-adenosyl-L-methionine = 4-amino-2-methyl-5-(phosphooxymethyl)pyrimidine + CO + 5'-deoxyadenosine + formate + L-methionine + 3 H(+). Its pathway is cofactor biosynthesis; thiamine diphosphate biosynthesis. In terms of biological role, catalyzes the synthesis of the hydroxymethylpyrimidine phosphate (HMP-P) moiety of thiamine from aminoimidazole ribotide (AIR) in a radical S-adenosyl-L-methionine (SAM)-dependent reaction. This is Phosphomethylpyrimidine synthase from Synechococcus sp. (strain ATCC 27144 / PCC 6301 / SAUG 1402/1) (Anacystis nidulans).